A 155-amino-acid polypeptide reads, in one-letter code: Small ribosomal subunit protein uS7 (155 aa).

Belongs to the universal ribosomal protein uS7 family. In terms of assembly, part of the 30S ribosomal subunit. Contacts proteins S9 and S11.

One of the primary rRNA binding proteins, it binds directly to 16S rRNA where it nucleates assembly of the head domain of the 30S subunit. Is located at the subunit interface close to the decoding center, probably blocks exit of the E-site tRNA. The sequence is that of Small ribosomal subunit protein uS7 from Xanthomonas axonopodis pv. citri (strain 306).